A 377-amino-acid polypeptide reads, in one-letter code: Endolytic peptidoglycan transglycosylase RlpA (377 aa).

Residues 1-19 (MHKQLPVICVAAGIVLLAA) form the signal peptide. The N-palmitoyl cysteine moiety is linked to residue C20. C20 carries S-diacylglycerol cysteine lipidation. A disordered region spans residues 196 to 277 (LPPRPDLSGG…PVSAPVTAPA (82 aa)). Composition is skewed to low complexity over residues 208–218 (SASSAPAQPQG) and 264–277 (PQTA…TAPA). The 77-residue stretch at 300–376 (AAASGRFVVQ…AQLQSFIASA (77 aa)) folds into the SPOR domain.

The protein belongs to the RlpA family.

It localises to the cell membrane. Its function is as follows. Lytic transglycosylase with a strong preference for naked glycan strands that lack stem peptides. In Salmonella typhi, this protein is Endolytic peptidoglycan transglycosylase RlpA.